The primary structure comprises 377 residues: MLRALKTHVEAPIVVATRAASTNAEKLEEIRERLAKGPNFQDFVQNPDNTRSEWEQYDGKLRREKGEEQRLRLPPWLKTTIPVGKNYAKIKAQMRELKLSTVCEEARCPNIGECWGGGEHGTQTATIMLMGDTCTRGCRFCSVKTARKPPPLDVNEPVNTATAIASWGLDYIVLTSVDRDDLPDGGSKHIAETVREIKARNSNIFVECLVPDFRGNLECVETIANSGLDVYAHNIETVEKLTPYVRDRRAHYRQTLQVLTEAKRFNPNLITKSSIMLGLGETDEEIENTLKDLREAGVDCVTLGQYMQPTNKHLKVIEYVTPEKFKHWEERGNELGFLYTASGPLVRSSYKAGEFFITSILENRKKRQNATEVPKEQ.

Positions 103, 108, 114, 134, 138, 141, and 349 each coordinate [4Fe-4S] cluster. Residues Glu119–Leu338 form the Radical SAM core domain.

This sequence belongs to the radical SAM superfamily. Lipoyl synthase family. [4Fe-4S] cluster serves as cofactor.

The protein resides in the mitochondrion. The enzyme catalyses [[Fe-S] cluster scaffold protein carrying a second [4Fe-4S](2+) cluster] + N(6)-octanoyl-L-lysyl-[protein] + 2 oxidized [2Fe-2S]-[ferredoxin] + 2 S-adenosyl-L-methionine + 4 H(+) = [[Fe-S] cluster scaffold protein] + N(6)-[(R)-dihydrolipoyl]-L-lysyl-[protein] + 4 Fe(3+) + 2 hydrogen sulfide + 2 5'-deoxyadenosine + 2 L-methionine + 2 reduced [2Fe-2S]-[ferredoxin]. Its pathway is protein modification; protein lipoylation via endogenous pathway; protein N(6)-(lipoyl)lysine from octanoyl-[acyl-carrier-protein]: step 2/2. Its function is as follows. Catalyzes the radical-mediated insertion of two sulfur atoms into the C-6 and C-8 positions of the octanoyl moiety bound to the lipoyl domains of lipoate-dependent enzymes, thereby converting the octanoylated domains into lipoylated derivatives. The sequence is that of Lipoyl synthase, mitochondrial from Drosophila sechellia (Fruit fly).